The following is an 876-amino-acid chain: Alanine--tRNA ligase (876 aa).

Lys-74 is modified (N6-acetyllysine). Residues His-564, His-568, Cys-666, and His-670 each contribute to the Zn(2+) site.

It belongs to the class-II aminoacyl-tRNA synthetase family. As to quaternary structure, homotetramer. Zn(2+) is required as a cofactor.

It is found in the cytoplasm. It catalyses the reaction tRNA(Ala) + L-alanine + ATP = L-alanyl-tRNA(Ala) + AMP + diphosphate. In terms of biological role, catalyzes the attachment of alanine to tRNA(Ala) in a two-step reaction: alanine is first activated by ATP to form Ala-AMP and then transferred to the acceptor end of tRNA(Ala). Also edits incorrectly charged Ser-tRNA(Ala) and Gly-tRNA(Ala) via its editing domain. This Shigella dysenteriae serotype 1 (strain Sd197) protein is Alanine--tRNA ligase.